We begin with the raw amino-acid sequence, 1153 residues long: ATP-dependent helicase/deoxyribonuclease subunit B (1153 aa).

The region spanning 1 to 289 is the UvrD-like helicase ATP-binding domain; it reads MELNAYIGRA…KHLEQNFNAL (289 aa). Position 8-15 (8-15) interacts with ATP; it reads GRAGTGKS. The UvrD-like helicase C-terminal domain maps to 269–583; that stretch reads LDVQRFIHND…SIGTMDLAKV (315 aa). [4Fe-4S] cluster-binding residues include cysteine 784, cysteine 1110, cysteine 1113, and cysteine 1119.

The protein belongs to the helicase family. AddB/RexB type 1 subfamily. In terms of assembly, heterodimer of AddA and AddB. Mg(2+) is required as a cofactor. Requires [4Fe-4S] cluster as cofactor.

Functionally, the heterodimer acts as both an ATP-dependent DNA helicase and an ATP-dependent, dual-direction single-stranded exonuclease. Recognizes the chi site generating a DNA molecule suitable for the initiation of homologous recombination. The AddB subunit has 5' -&gt; 3' nuclease activity but not helicase activity. This is ATP-dependent helicase/deoxyribonuclease subunit B from Staphylococcus saprophyticus subsp. saprophyticus (strain ATCC 15305 / DSM 20229 / NCIMB 8711 / NCTC 7292 / S-41).